A 248-amino-acid chain; its full sequence is Probable transcriptional regulatory protein ECH_0704 (248 aa).

Residues 1–21 (MAGHSQFANIKHRKGAQDAKR) form a disordered region.

It belongs to the TACO1 family.

The protein localises to the cytoplasm. The protein is Probable transcriptional regulatory protein ECH_0704 of Ehrlichia chaffeensis (strain ATCC CRL-10679 / Arkansas).